The following is a 497-amino-acid chain: Paired box protein Pax-2-A (497 aa).

A DNA-binding region (paired) is located at residues 16-142 (GHGGVNQLGG…SSINRIIRTK (127 aa)). Residues 19-75 (GVNQLGGVFVNGRPLPDVVRQRIVELAHQGVRPCDISRQLRVSHGCVSKILGRYYET) form a PAI subdomain region. The interval 94 to 142 (KVVDKIAEYKRQNPTMFAWEIRDRLLAEGICDNDTVPSVSSINRIIRTK) is RED subdomain. The tract at residues 143–224 (VQQPFHPTPD…GDSQSSVESL (82 aa)) is disordered. Residues 166–178 (VPSTASPPVSSAS) are compositionally biased toward low complexity.

As to expression, expression becomes spatially localized at mid-gastrula stages and is confined to the nervous system (midbrain, hindbrain, spinal cord), sensory organs (optic vesicle and stalk, otic vesicle), visceral arches, developing excretory system (pronephros, pronephric duct, rectal diverticulum, proctodaeum) and thyroid gland. Splicing does not appear to be tissue-specific and tissues displayed the same spectrum of splice variants.

The protein localises to the nucleus. Its function is as follows. Probable transcription factor. Involved in kidney development, acting synergistically with lhx1/lim-1 in pronephric morphogenesis during the tailbud stages. This is Paired box protein Pax-2-A (pax2-a) from Xenopus laevis (African clawed frog).